We begin with the raw amino-acid sequence, 187 residues long: UPF0301 protein LPC_2717 (187 aa).

It belongs to the UPF0301 (AlgH) family.

The protein is UPF0301 protein LPC_2717 of Legionella pneumophila (strain Corby).